Here is a 489-residue protein sequence, read N- to C-terminus: MRVLHVCSELYPILKTGGLADVTAALPPALASFGVDSRVLVPGFPAFINAIKDKQLLINIPSRFGAEEINIFLAKVPNTKIDIYVIDAPSLFARPGNPYADSSNQAYADNYLRFALLGWIAARISEGLDAKWKPEIVHSHDWHAGLVPAYIKASELASGKKAVKTVFTVHNLAYQGLFPMSVFAELDLPGIFLSMNGLEFYGQVSFMKAGLYFADKITTVSPTYAKEIQTYEQGCGLEGLLADRHNDLYGVLNGVDPQIWNPKKDSLIATNYSSTTVATGKAKCKLALQQMMGLAEKEDALLFGIVTRLTEQKGLNLLVEAIGEITSRGGQVVLLGSGDKALEEVFLAAAKKYPKSIAVQIGYDEEQAHRIIAGSDVIMVPSRFEPCGLTQLYGLTYGTLPLVHKVGGLADTVTDSSLENLADGTATGFVFDEFSVESLTLAIRRAFALYNRKTDWKKVRKTAMQQQVTWDSSAEKIYQIYKNLVRENN.

Position 15 (lysine 15) interacts with ADP-alpha-D-glucose.

The protein belongs to the glycosyltransferase 1 family. Bacterial/plant glycogen synthase subfamily.

It catalyses the reaction [(1-&gt;4)-alpha-D-glucosyl](n) + ADP-alpha-D-glucose = [(1-&gt;4)-alpha-D-glucosyl](n+1) + ADP + H(+). The protein operates within glycan biosynthesis; glycogen biosynthesis. Synthesizes alpha-1,4-glucan chains using ADP-glucose. The protein is Glycogen synthase of Francisella tularensis subsp. novicida (strain U112).